Reading from the N-terminus, the 392-residue chain is S-adenosylmethionine synthase (392 aa).

H22 serves as a coordination point for ATP. D24 lines the Mg(2+) pocket. Residue E50 coordinates K(+). Residues E63 and Q106 each contribute to the L-methionine site. Residues 106–116 (QSPDITQGVTL) form a flexible loop region. Residues 170–172 (DGK), 236–237 (KF), D245, 251–252 (RK), A268, and K272 contribute to the ATP site. D245 lines the L-methionine pocket. Residue K276 participates in L-methionine binding.

Belongs to the AdoMet synthase family. In terms of assembly, homotetramer; dimer of dimers. Requires Mg(2+) as cofactor. K(+) serves as cofactor.

It localises to the cytoplasm. The catalysed reaction is L-methionine + ATP + H2O = S-adenosyl-L-methionine + phosphate + diphosphate. It functions in the pathway amino-acid biosynthesis; S-adenosyl-L-methionine biosynthesis; S-adenosyl-L-methionine from L-methionine: step 1/1. Catalyzes the formation of S-adenosylmethionine (AdoMet) from methionine and ATP. The overall synthetic reaction is composed of two sequential steps, AdoMet formation and the subsequent tripolyphosphate hydrolysis which occurs prior to release of AdoMet from the enzyme. In Sulfurimonas denitrificans (strain ATCC 33889 / DSM 1251) (Thiomicrospira denitrificans (strain ATCC 33889 / DSM 1251)), this protein is S-adenosylmethionine synthase.